The sequence spans 108 residues: U-scoloptoxin(10)-Sm1a (108 aa).

The first 24 residues, 1-24 (MNKQWLHFFSVLLLCYVIEETCSL), serve as a signal peptide directing secretion.

This sequence belongs to the scoloptoxin-10 family. Contains 3 disulfide bonds. In terms of tissue distribution, expressed by the venom gland.

The protein resides in the secreted. This is U-scoloptoxin(10)-Sm1a from Scolopendra morsitans (Tanzanian blue ringleg centipede).